The sequence spans 614 residues: Phosphomethylpyrimidine synthase (614 aa).

Substrate contacts are provided by residues Asn-226, Met-255, Tyr-284, His-320, 340–342, 381–384, and Glu-420; these read SRG and DGLR. His-424 contacts Zn(2+). Tyr-447 serves as a coordination point for substrate. His-488 contributes to the Zn(2+) binding site. [4Fe-4S] cluster is bound by residues Cys-568, Cys-571, and Cys-576.

The protein belongs to the ThiC family. As to quaternary structure, homodimer. [4Fe-4S] cluster is required as a cofactor.

It carries out the reaction 5-amino-1-(5-phospho-beta-D-ribosyl)imidazole + S-adenosyl-L-methionine = 4-amino-2-methyl-5-(phosphooxymethyl)pyrimidine + CO + 5'-deoxyadenosine + formate + L-methionine + 3 H(+). The protein operates within cofactor biosynthesis; thiamine diphosphate biosynthesis. Its function is as follows. Catalyzes the synthesis of the hydroxymethylpyrimidine phosphate (HMP-P) moiety of thiamine from aminoimidazole ribotide (AIR) in a radical S-adenosyl-L-methionine (SAM)-dependent reaction. This Acidovorax sp. (strain JS42) protein is Phosphomethylpyrimidine synthase.